We begin with the raw amino-acid sequence, 351 residues long: uncharacterized protein (351 aa).

Mn(2+) contacts are provided by Asp-215, Asp-226, His-290, Glu-319, and Glu-333.

Belongs to the peptidase M24B family. It depends on Mn(2+) as a cofactor.

This is an uncharacterized protein from Staphylococcus aureus (strain MSSA476).